A 436-amino-acid chain; its full sequence is Trigger factor (436 aa).

The PPIase FKBP-type domain occupies 161–248; the sequence is TDRVTIDLYG…LKKVEQYRLP (88 aa).

Belongs to the FKBP-type PPIase family. Tig subfamily.

The protein resides in the cytoplasm. The enzyme catalyses [protein]-peptidylproline (omega=180) = [protein]-peptidylproline (omega=0). Involved in protein export. Acts as a chaperone by maintaining the newly synthesized protein in an open conformation. Functions as a peptidyl-prolyl cis-trans isomerase. The chain is Trigger factor from Baumannia cicadellinicola subsp. Homalodisca coagulata.